An 874-amino-acid polypeptide reads, in one-letter code: S-layer protein (874 aa).

Residues 1–30 form the signal peptide; that stretch reads MAKTNSYKKVIAGTMTAAMVAGVVSPVAAA. 3 consecutive SLH domains span residues 31–93, 94–151, and 152–214; these read GKSF…NAQP, SFKD…KVDG, and TLVT…ENSD.

Its subcellular location is the secreted. The protein localises to the cell wall. It is found in the S-layer. In terms of biological role, the S-layer is a paracrystalline mono-layered assembly of proteins which coat the surface of bacteria. This Bacillus licheniformis protein is S-layer protein.